The sequence spans 220 residues: uncharacterized protein (220 aa).

It belongs to the DadA oxidoreductase family. It depends on FAD as a cofactor.

This is an uncharacterized protein from Halorhodospira halophila (Ectothiorhodospira halophila).